Here is a 285-residue protein sequence, read N- to C-terminus: V-set and transmembrane domain-containing protein 2B (285 aa).

A signal peptide spans 1–28 (MEQRNRLGALGYLPPLLLHALLLFVADA). Positions 29–143 (AFTEVPKDVT…DDDTQEHKAQ (115 aa)) constitute an Ig-like V-type domain. Residues 29 to 263 (AFTEVPKDVT…HGSGTGRSYT (235 aa)) are Extracellular-facing. Cysteine 49 and cysteine 127 are oxidised to a cystine. The interval 161-226 (EAVSHIQSSG…EAAAASAAHT (66 aa)) is disordered. 2 stretches are compositionally biased toward low complexity: residues 177–189 (ASAA…GAAS) and 208–226 (PAAI…AAHT). The helical transmembrane segment at 264-284 (TDPLLSLLLLALHKFLRLLLG) threads the bilayer. A topological domain (cytoplasmic) is located at residue histidine 285.

It is found in the membrane. In Homo sapiens (Human), this protein is V-set and transmembrane domain-containing protein 2B (VSTM2B).